The sequence spans 764 residues: FHF complex subunit HOOK interacting protein 2A (764 aa).

The tract at residues 190–236 (SEDGPKGQDPGSGDVSQCQQPQELSGATGVEPTESEEEPPHQMDDLS) is disordered. The span at 203-214 (DVSQCQQPQELS) shows a compositional bias: polar residues.

It belongs to the FHIP family.

May be required for proper functioning of the nervous system. This chain is FHF complex subunit HOOK interacting protein 2A, found in Mus musculus (Mouse).